Consider the following 284-residue polypeptide: Acetylglutamate kinase (284 aa).

Substrate contacts are provided by residues 64–65, arginine 86, and asparagine 177; that span reads GG.

The protein belongs to the acetylglutamate kinase family. ArgB subfamily.

It is found in the cytoplasm. It carries out the reaction N-acetyl-L-glutamate + ATP = N-acetyl-L-glutamyl 5-phosphate + ADP. The protein operates within amino-acid biosynthesis; L-arginine biosynthesis; N(2)-acetyl-L-ornithine from L-glutamate: step 2/4. Catalyzes the ATP-dependent phosphorylation of N-acetyl-L-glutamate. The chain is Acetylglutamate kinase from Haemophilus ducreyi (strain 35000HP / ATCC 700724).